A 517-amino-acid polypeptide reads, in one-letter code: Putative lipase ATG15 (517 aa).

At 1-6 (MRASTH) the chain is on the cytoplasmic side. Residues 7–27 (SWLLLVVVLSLSSFTVNAVIL) traverse the membrane as a helical; Signal-anchor for type II membrane protein segment. At 28–517 (EGLIPPRSHL…TNWHFTDETL (490 aa)) the chain is on the lumenal side. Residues Asn-187, Asn-221, and Asn-303 are each glycosylated (N-linked (GlcNAc...) asparagine). Ser-319 functions as the Charge relay system in the catalytic mechanism. The disordered stretch occupies residues 466–499 (GWRWPWHRGDSADDDGDSDEDTDEDDKLAVPKAR). Residues 477–491 (ADDDGDSDEDTDEDD) show a composition bias toward acidic residues.

Belongs to the AB hydrolase superfamily. Lipase family. In terms of assembly, binds to both phosphatidylinositol (PI) and phosphatidylinositol 3,5-bisphosphate (PIP2).

The protein localises to the endosome. Its subcellular location is the multivesicular body membrane. It localises to the prevacuolar compartment membrane. It catalyses the reaction a triacylglycerol + H2O = a diacylglycerol + a fatty acid + H(+). Functionally, lipase which is essential for lysis of subvacuolar cytoplasm to vacuole targeted bodies and intravacuolar autophagic bodies. Involved in the lysis of intravacuolar multivesicular body (MVB) vesicles. The intravacuolar membrane disintegration by ATG15 is critical to life span extension. The sequence is that of Putative lipase ATG15 (ATG15) from Mycosarcoma maydis (Corn smut fungus).